Reading from the N-terminus, the 464-residue chain is MIPTIALVGRPNVGKSTLFNRLTKTRDAIVANFAGLTRDRKYGDAEFEGKRFIVVDTGGISGDEEGIDSVMAEQSLQAIAESDIILFLVDCRDGLTHVDSQIAQHLRTLHKPTFLVANKVDGQNHDLAIAPFFELGLGEVHSVAAAHGRGVNTLMATVLADIAVESEADEADAERRLKMAIIGRPNVGKSTLVNRMLGEERVVVFDMPGTTRDSIYIDYERDEKHYTLIDTAGVRRRKNVKLTVEKFSIIKTLQAINDANVVILVMDASEGIVDQDLHLLGHAIESGRALVVALNKWDGLEDDHKSYVKTELQRRLSFVDYADLHFISALHGTGVGNLYKSVEKAYQAATEKYSTSFLTRILEDAVTAHQPPLVRGRRIKLRYAHAGGHNPPIIVIHGTQTSEVPNHYTRYLEKVYRRALELHGTPVRIEYRSGDNPFAGRKNKLTERQLTKKRRLMKHVKKKK.

2 consecutive EngA-type G domains span residues 3–166 and 177–350; these read PTIA…AVES and LKMA…QAAT. Residues 9–16, 56–60, 118–121, 183–190, 230–234, and 295–298 each bind GTP; these read GRPNVGKS, DTGGI, NKVD, DTAGV, and NKWD. Positions 351 to 435 constitute a KH-like domain; that stretch reads EKYSTSFLTR…PVRIEYRSGD (85 aa).

The protein belongs to the TRAFAC class TrmE-Era-EngA-EngB-Septin-like GTPase superfamily. EngA (Der) GTPase family. As to quaternary structure, associates with the 50S ribosomal subunit.

In terms of biological role, GTPase that plays an essential role in the late steps of ribosome biogenesis. This is GTPase Der from Teredinibacter turnerae (strain ATCC 39867 / T7901).